The following is a 415-amino-acid chain: Glucose-1-phosphate adenylyltransferase (415 aa).

Alpha-D-glucose 1-phosphate is bound by residues Tyr98, Gly163, 178 to 179 (EK), and Ser189.

This sequence belongs to the bacterial/plant glucose-1-phosphate adenylyltransferase family. As to quaternary structure, homotetramer.

It catalyses the reaction alpha-D-glucose 1-phosphate + ATP + H(+) = ADP-alpha-D-glucose + diphosphate. Its pathway is glycan biosynthesis; glycogen biosynthesis. In terms of biological role, involved in the biosynthesis of ADP-glucose, a building block required for the elongation reactions to produce glycogen. Catalyzes the reaction between ATP and alpha-D-glucose 1-phosphate (G1P) to produce pyrophosphate and ADP-Glc. In Fervidobacterium nodosum (strain ATCC 35602 / DSM 5306 / Rt17-B1), this protein is Glucose-1-phosphate adenylyltransferase.